Here is a 625-residue protein sequence, read N- to C-terminus: Glucose dehydrogenase [FAD, quinone] (625 aa).

The signal sequence occupies residues 1–42 (MSASASACDCLVGVPTGPTLASTCGGSAFMLFMGLLEVFIRS). An FAD-binding site is contributed by 66-95 (DFIVIGGGSAGSVVASRLSEVPQWKVLLIE). The active-site Proton acceptor is histidine 544. Selenocysteine 613 is a non-standard amino acid (selenocysteine).

This sequence belongs to the GMC oxidoreductase family. It depends on FAD as a cofactor.

The protein localises to the secreted. The catalysed reaction is a quinone + D-glucose = D-glucono-1,5-lactone + a quinol. Its function is as follows. Essential for cuticular modification during development. The polypeptide is Glucose dehydrogenase [FAD, quinone] (Gld) (Drosophila melanogaster (Fruit fly)).